The following is a 439-amino-acid chain: Putative porin QuiX (439 aa).

Residues 1-22 form the signal peptide; the sequence is MRHFFKLGLVSAAVLGSQMTLA.

It belongs to the OprB family.

The protein localises to the cell outer membrane. In terms of biological role, could be involved in the transport of quinate or shikimate. The protein is Putative porin QuiX (quiX) of Acinetobacter baylyi (strain ATCC 33305 / BD413 / ADP1).